A 37-amino-acid polypeptide reads, in one-letter code: Cytochrome b6-f complex subunit 5 (37 aa).

The helical transmembrane segment at 5-25 threads the bilayer; that stretch reads LLSGIVLGLMPVTLAGLFTTA.

Belongs to the PetG family. As to quaternary structure, the 4 large subunits of the cytochrome b6-f complex are cytochrome b6, subunit IV (17 kDa polypeptide, PetD), cytochrome f and the Rieske protein, while the 4 small subunits are PetG, PetL, PetM and PetN. The complex functions as a dimer.

The protein resides in the plastid. It localises to the chloroplast thylakoid membrane. Its function is as follows. Component of the cytochrome b6-f complex, which mediates electron transfer between photosystem II (PSII) and photosystem I (PSI), cyclic electron flow around PSI, and state transitions. PetG is required for either the stability or assembly of the cytochrome b6-f complex. In Ostreococcus tauri, this protein is Cytochrome b6-f complex subunit 5.